A 127-amino-acid polypeptide reads, in one-letter code: Modulator protein MzrA (127 aa).

Residues 1-11 lie on the Cytoplasmic side of the membrane; the sequence is MRKPRVTLRHL. Residues 12–31 form a helical membrane-spanning segment; it reads AWSTMLLMVLGTGMLFWSAV. Residues 32–127 are Periplasmic-facing; it reads RQQESTLAIR…RLRDAPHRMG (96 aa).

The protein belongs to the MzrA family. As to quaternary structure, interacts with EnvZ.

It is found in the cell inner membrane. Functionally, modulates the activity of the EnvZ/OmpR two-component regulatory system, probably by directly modulating EnvZ enzymatic activity and increasing stability of phosphorylated OmpR. In Citrobacter rodentium (strain ICC168) (Citrobacter freundii biotype 4280), this protein is Modulator protein MzrA.